Here is a 398-residue protein sequence, read N- to C-terminus: 1-deoxy-D-xylulose 5-phosphate reductoisomerase (398 aa).

Residues T28, G29, S30, I31, G54, N57, and N135 each coordinate NADPH. K136 lines the 1-deoxy-D-xylulose 5-phosphate pocket. An NADPH-binding site is contributed by E137. D159 serves as a coordination point for Mn(2+). 4 residues coordinate 1-deoxy-D-xylulose 5-phosphate: S160, E161, S185, and H208. E161 serves as a coordination point for Mn(2+). G214 contributes to the NADPH binding site. 1-deoxy-D-xylulose 5-phosphate is bound by residues S221, N226, K227, and E230. Position 230 (E230) interacts with Mn(2+).

This sequence belongs to the DXR family. The cofactor is Mg(2+). Mn(2+) serves as cofactor.

It catalyses the reaction 2-C-methyl-D-erythritol 4-phosphate + NADP(+) = 1-deoxy-D-xylulose 5-phosphate + NADPH + H(+). Its pathway is isoprenoid biosynthesis; isopentenyl diphosphate biosynthesis via DXP pathway; isopentenyl diphosphate from 1-deoxy-D-xylulose 5-phosphate: step 1/6. In terms of biological role, catalyzes the NADPH-dependent rearrangement and reduction of 1-deoxy-D-xylulose-5-phosphate (DXP) to 2-C-methyl-D-erythritol 4-phosphate (MEP). This chain is 1-deoxy-D-xylulose 5-phosphate reductoisomerase, found in Rhodococcus jostii (strain RHA1).